The following is a 180-amino-acid chain: Stathmin-3 (180 aa).

In terms of domain architecture, SLD spans 38 to 180; sequence GDMEVKQLDK…NKEQREEISG (143 aa). Over residues 60–74 the composition is skewed to low complexity; that stretch reads SPSDLSPESPILSSP. The interval 60-82 is disordered; it reads SPSDLSPESPILSSPPKKKDLSL. The stretch at 75–179 forms a coiled coil; sequence PKKKDLSLEE…RNKEQREEIS (105 aa).

Belongs to the stathmin family.

The sequence is that of Stathmin-3 (STMN3) from Gallus gallus (Chicken).